Reading from the N-terminus, the 46-residue chain is Photosystem II reaction center protein Psb30 (46 aa).

N-formylmethionine is present on Met-1. Residues 1–20 lie on the Lumenal side of the membrane; the sequence is MGIFNGIIEFLSNINFEVIA. A helical membrane pass occupies residues 21–38; it reads QLTMIAMIGIAGPMIIFL. The Cytoplasmic segment spans residues 39–46; the sequence is LAVRRGNL.

It belongs to the Psb30/Ycf12 family. As to quaternary structure, PSII is composed of 1 copy each of membrane proteins PsbA, PsbB, PsbC, PsbD, PsbE, PsbF, PsbH, PsbI, PsbJ, PsbK, PsbL, PsbM, PsbT, PsbX, PsbY, PsbZ, Psb30/Ycf12, peripheral proteins PsbO, CyanoQ (PsbQ), PsbU, PsbV and a large number of cofactors. It forms dimeric complexes. Part of a photosystem II (PSII) assembly intermediate complex PSII-I; crystallized from a strain deleted of psbJ, it forms monomeric PSII before addition of the oxygen evolving complex. PSII-I includes 3 assembly factors not found in mature PSII (Psb27, Psb28 and Psb34). It depends on PSII binds multiple chlorophylls, carotenoids and specific lipids. as a cofactor.

The protein resides in the cellular thylakoid membrane. A core subunit of photosystem II (PSII). PSII is a light-driven water plastoquinone oxidoreductase, using light energy to abstract electrons from H(2)O, generating a proton gradient subsequently used for ATP formation. Helps stabilize PSII. The polypeptide is Photosystem II reaction center protein Psb30 (Thermosynechococcus vestitus (strain NIES-2133 / IAM M-273 / BP-1)).